We begin with the raw amino-acid sequence, 209 residues long: Uracil phosphoribosyltransferase (209 aa).

Residues R79, R104, and 131-139 (DPMLATGGS) contribute to the 5-phospho-alpha-D-ribose 1-diphosphate site. Uracil contacts are provided by residues I194 and 199 to 201 (GDA). D200 is a binding site for 5-phospho-alpha-D-ribose 1-diphosphate.

This sequence belongs to the UPRTase family. Mg(2+) serves as cofactor.

It catalyses the reaction UMP + diphosphate = 5-phospho-alpha-D-ribose 1-diphosphate + uracil. It participates in pyrimidine metabolism; UMP biosynthesis via salvage pathway; UMP from uracil: step 1/1. Its activity is regulated as follows. Allosterically activated by GTP. Catalyzes the conversion of uracil and 5-phospho-alpha-D-ribose 1-diphosphate (PRPP) to UMP and diphosphate. This chain is Uracil phosphoribosyltransferase, found in Clostridium botulinum (strain Alaska E43 / Type E3).